Here is a 63-residue protein sequence, read N- to C-terminus: High-potential iron-sulfur protein (63 aa).

[4Fe-4S] cluster-binding residues include Cys-23, Cys-26, Cys-41, and Cys-56.

Belongs to the high-potential iron-sulfur protein (HiPIP) family. In terms of assembly, homodimer.

Its function is as follows. Specific class of high-redox-potential 4Fe-4S ferredoxins. Functions in anaerobic electron transport in most purple and in some other photosynthetic bacteria and in at least one genus (Paracoccus) of halophilic, denitrifying bacteria. In Rhodocyclus tenuis (Rhodospirillum tenue), this protein is High-potential iron-sulfur protein (hip).